A 627-amino-acid polypeptide reads, in one-letter code: Ras and EF-hand domain-containing protein homolog (627 aa).

Positions 55–245 (YERVIRNFLR…RKLHDSNDGL (191 aa)) form a coiled coil. Residues serine 266 and serine 272 each carry the phosphoserine modification. GTP contacts are provided by residues 438–443 (AVGKSS), 541–544 (NKAD), and 578–579 (AK).

Belongs to the small GTPase superfamily. Rab family. As to quaternary structure, homodimer. Interacts with the dynein-dynactin complex.

It localises to the cytoplasm. Its subcellular location is the perinuclear region. Binds predominantly GDP, and also GTP. Acts as a dynein adapter protein that activates dynein-mediated transport and dynein-dynactin motility on microtubules. The chain is Ras and EF-hand domain-containing protein homolog (Rasef) from Mus musculus (Mouse).